A 373-amino-acid chain; its full sequence is Spore germination protein KB (373 aa).

The next 10 membrane-spanning stretches (helical) occupy residues 11–31 (LFVM…PGSM), 37–57 (WIAV…YQGI), 78–98 (LSWL…ARVL), 105–125 (LLTF…LMVV), 143–163 (LLFG…IVSG), 185–205 (VFTQ…MIFP), 219–239 (IAMA…ISVL), 269–289 (VFFM…YLYA), 306–326 (LAYP…TNFS), and 338–358 (LYIH…VAVW).

Belongs to the amino acid-polyamine-organocation (APC) superfamily. Spore germination protein (SGP) (TC 2.A.3.9) family.

Its subcellular location is the cell membrane. Functionally, involved in the germination response to the combination of glucose, fructose, L-asparagine, and KCl. The protein is Spore germination protein KB (gerKB) of Bacillus subtilis (strain 168).